Consider the following 73-residue polypeptide: Putative membrane protein insertion efficiency factor (73 aa).

Belongs to the UPF0161 family.

It localises to the cell inner membrane. Could be involved in insertion of integral membrane proteins into the membrane. This is Putative membrane protein insertion efficiency factor from Jannaschia sp. (strain CCS1).